The primary structure comprises 268 residues: Eukaryotic translation initiation factor 3 subunit J (268 aa).

Disordered regions lie at residues 1–27 (MSWDDEEFEVRTSTKDQPMVVSWDDEF), 40–63 (DAEEVPKQKQKPKAAPKAAKKVDK), and 217–249 (LAKVKGGTATGGAGKKKAKAARPNLGGAFKKDQ). Residues 47-58 (QKQKPKAAPKAA) show a composition bias toward basic residues. The stretch at 191–221 (IESIRQTVATLNVLIKEKERQERQARLAKVK) forms a coiled coil.

This sequence belongs to the eIF-3 subunit J family. As to quaternary structure, component of the eukaryotic translation initiation factor 3 (eIF-3) complex.

It localises to the cytoplasm. In terms of biological role, component of the eukaryotic translation initiation factor 3 (eIF-3) complex, which is involved in protein synthesis of a specialized repertoire of mRNAs and, together with other initiation factors, stimulates binding of mRNA and methionyl-tRNAi to the 40S ribosome. The eIF-3 complex specifically targets and initiates translation of a subset of mRNAs involved in cell proliferation. This chain is Eukaryotic translation initiation factor 3 subunit J, found in Eremothecium gossypii (strain ATCC 10895 / CBS 109.51 / FGSC 9923 / NRRL Y-1056) (Yeast).